The primary structure comprises 59 residues: Cuticle protein 7 isoform c (59 aa).

Gln-1 bears the Pyrrolidone carboxylic acid mark.

This chain is Cuticle protein 7 isoform c, found in Limulus polyphemus (Atlantic horseshoe crab).